The chain runs to 180 residues: Large ribosomal subunit protein uL6 (180 aa).

The protein belongs to the universal ribosomal protein uL6 family. In terms of assembly, part of the 50S ribosomal subunit.

Functionally, this protein binds to the 23S rRNA, and is important in its secondary structure. It is located near the subunit interface in the base of the L7/L12 stalk, and near the tRNA binding site of the peptidyltransferase center. This chain is Large ribosomal subunit protein uL6, found in Thermus thermophilus (strain ATCC BAA-163 / DSM 7039 / HB27).